The chain runs to 75 residues: Protein SlyX homolog (75 aa).

The protein belongs to the SlyX family.

The chain is Protein SlyX homolog from Vibrio atlanticus (strain LGP32) (Vibrio splendidus (strain Mel32)).